The sequence spans 96 residues: Glutamyl-tRNA(Gln) amidotransferase subunit C (96 aa).

Belongs to the GatC family. Heterotrimer of A, B and C subunits.

It catalyses the reaction L-glutamyl-tRNA(Gln) + L-glutamine + ATP + H2O = L-glutaminyl-tRNA(Gln) + L-glutamate + ADP + phosphate + H(+). The catalysed reaction is L-aspartyl-tRNA(Asn) + L-glutamine + ATP + H2O = L-asparaginyl-tRNA(Asn) + L-glutamate + ADP + phosphate + 2 H(+). Its function is as follows. Allows the formation of correctly charged Asn-tRNA(Asn) or Gln-tRNA(Gln) through the transamidation of misacylated Asp-tRNA(Asn) or Glu-tRNA(Gln) in organisms which lack either or both of asparaginyl-tRNA or glutaminyl-tRNA synthetases. The reaction takes place in the presence of glutamine and ATP through an activated phospho-Asp-tRNA(Asn) or phospho-Glu-tRNA(Gln). This chain is Glutamyl-tRNA(Gln) amidotransferase subunit C, found in Neisseria meningitidis serogroup B (strain ATCC BAA-335 / MC58).